The sequence spans 499 residues: Guanosine-5'-triphosphate,3'-diphosphate pyrophosphatase (499 aa).

It belongs to the GppA/Ppx family. GppA subfamily.

It catalyses the reaction guanosine 3'-diphosphate 5'-triphosphate + H2O = guanosine 3',5'-bis(diphosphate) + phosphate + H(+). It participates in purine metabolism; ppGpp biosynthesis; ppGpp from GTP: step 2/2. Catalyzes the conversion of pppGpp to ppGpp. Guanosine pentaphosphate (pppGpp) is a cytoplasmic signaling molecule which together with ppGpp controls the 'stringent response', an adaptive process that allows bacteria to respond to amino acid starvation, resulting in the coordinated regulation of numerous cellular activities. The protein is Guanosine-5'-triphosphate,3'-diphosphate pyrophosphatase of Klebsiella pneumoniae subsp. pneumoniae (strain ATCC 700721 / MGH 78578).